A 493-amino-acid chain; its full sequence is uncharacterized protein (493 aa).

A helical membrane pass occupies residues 10–30 (LVPSTRFALSLVMFFGCLVTY). 3 N-linked (GlcNAc...) asparagine glycosylation sites follow: asparagine 35, asparagine 47, and asparagine 69. A run of 6 helical transmembrane segments spans residues 85–105 (MVLSSFFYGYIGSQIIGGHLA), 112–132 (RVVFVTILGSALLTLLNPVAA), 144–164 (AAIGFLQGATFPAMHTMWSVW), 175–195 (GVTYAGAQIGNVIVLPLSGFL), 205–225 (PSIFYIIGVFGVLWTAVWWYV), and 272–292 (AVWACWAGHFAGDWGAYTMLV). Asparagine 305 carries an N-linked (GlcNAc...) asparagine glycan. The next 4 helical transmembrane spans lie at 311-331 (AVASIPYIAYFLAINAGGVLA), 348-368 (AAMLVALIGQGIFLVASGYCG), 375-395 (VIIFITCGMAISGLQYAGFVV), and 406-426 (GTVMGTGNTISALAGIISPAV). Asparagine 433 carries an N-linked (GlcNAc...) asparagine glycan. Residues 441–461 (MVLWLTAGILTIGALLFSIFA) form a helical membrane-spanning segment.

This sequence belongs to the major facilitator superfamily. Sodium/anion cotransporter family.

Its subcellular location is the membrane. This is an uncharacterized protein from Caenorhabditis elegans.